A 533-amino-acid chain; its full sequence is Glucose-6-phosphate isomerase (533 aa).

The Proton donor role is filled by glutamate 341. Residues histidine 372 and lysine 501 contribute to the active site.

Belongs to the GPI family.

It localises to the cytoplasm. The enzyme catalyses alpha-D-glucose 6-phosphate = beta-D-fructose 6-phosphate. The protein operates within carbohydrate biosynthesis; gluconeogenesis. It participates in carbohydrate degradation; glycolysis; D-glyceraldehyde 3-phosphate and glycerone phosphate from D-glucose: step 2/4. Its function is as follows. Catalyzes the reversible isomerization of glucose-6-phosphate to fructose-6-phosphate. The protein is Glucose-6-phosphate isomerase of Cereibacter sphaeroides (strain ATCC 17025 / ATH 2.4.3) (Rhodobacter sphaeroides).